Here is a 341-residue protein sequence, read N- to C-terminus: MTTDAVQTMIPTLDITERPAPAPRAKVEAGVKLRGAEKVARIPVKIIPTTELPKKPDWIRVRIPVSPEVDRIKALLRKHKLHSVCEEASCPNLGECFSGGTATFMIMGDICTRRCPFCDVGHGRPKPLDVNEPESLAIAIADLKLKYVVITSVDRDDLRDGGAQHFADCIREIRKLSPNVMLETLVPDYRGRMDVALEITAAEPPDVFNHNLETVPRLYKAARPGSDYQWSLTLLQKFKQMMPHIPTKSGLMLGLGETDEEVIEVMKRMREHDIDMLTLGQYLQPSRSHLPVQRFVHPDTFAWFAEEGYKMGFKNVASGPLVRSSYHADEQAKLVKASLVS.

Cysteine 85, cysteine 90, cysteine 96, cysteine 111, cysteine 115, cysteine 118, and serine 325 together coordinate [4Fe-4S] cluster. The region spanning 97–314 (FSGGTATFMI…AEEGYKMGFK (218 aa)) is the Radical SAM core domain.

Belongs to the radical SAM superfamily. Lipoyl synthase family. The cofactor is [4Fe-4S] cluster.

It localises to the cytoplasm. It carries out the reaction [[Fe-S] cluster scaffold protein carrying a second [4Fe-4S](2+) cluster] + N(6)-octanoyl-L-lysyl-[protein] + 2 oxidized [2Fe-2S]-[ferredoxin] + 2 S-adenosyl-L-methionine + 4 H(+) = [[Fe-S] cluster scaffold protein] + N(6)-[(R)-dihydrolipoyl]-L-lysyl-[protein] + 4 Fe(3+) + 2 hydrogen sulfide + 2 5'-deoxyadenosine + 2 L-methionine + 2 reduced [2Fe-2S]-[ferredoxin]. It participates in protein modification; protein lipoylation via endogenous pathway; protein N(6)-(lipoyl)lysine from octanoyl-[acyl-carrier-protein]: step 2/2. Catalyzes the radical-mediated insertion of two sulfur atoms into the C-6 and C-8 positions of the octanoyl moiety bound to the lipoyl domains of lipoate-dependent enzymes, thereby converting the octanoylated domains into lipoylated derivatives. The protein is Lipoyl synthase of Pseudomonas fluorescens (strain SBW25).